Consider the following 69-residue polypeptide: Conopeptide Y-Pl1 (69 aa).

An N-terminal signal peptide occupies residues 1–20; the sequence is MSKLGVVLFVFLLLLPLAAP. A propeptide spanning residues 21-69 is cleaved from the precursor; that stretch reads QPVGDQPADQPADRNAEARARFLHPFQYYTLYRYLTRFLHRYPIYYIRY.

The protein belongs to the conotoxin M superfamily. Conopeptide Y family. In terms of tissue distribution, expressed by the venom duct.

It localises to the secreted. Its function is as follows. Tyrosine-rich conopeptide that targets several channels/receptors that are expressed in Xenopus oocytes. These targets are the voltage-gated potassium channels Kv1.6/KCNA6 (IC(50) is 170 nM) and Kv1.2/KCNA2 (IC(50) is 2.0 uM), Nav1.2/SCN2A (30% of inhibition), and N-methyl-D-aspartate (NMDA) receptor (GRIN1/GRIN2A/GRIN3B and GRIN1/GRIN2B/GRIN3B) (15% of inhibition). In vivo, causes the marine worm N.virens to move very slowly in contrast to control worms, and causes seizures (at 5 nmol) and death (20 nmol) to mice when intracranially injected. The sequence is that of Conopeptide Y-Pl1 from Conus planorbis (Planorbis cone).